Reading from the N-terminus, the 318-residue chain is Probable cell division protein WhiA (318 aa).

The segment at residues 281–314 (SLKELGEMLSPPVGKSGVNHRLRRIEKIAEELSK) is a DNA-binding region (H-T-H motif).

The protein belongs to the WhiA family.

Involved in cell division and chromosome segregation. This is Probable cell division protein WhiA from Clostridium tetani (strain Massachusetts / E88).